The sequence spans 494 residues: DEAD-box ATP-dependent RNA helicase 20 (494 aa).

Residues 1–20 (MSRFDGRAADPGSYRDRRSE) show a composition bias toward basic and acidic residues. The interval 1–39 (MSRFDGRAADPGSYRDRRSEGAFGGGTRAFAPTSKADSA) is disordered. Low complexity predominate over residues 29 to 39 (AFAPTSKADSA). A Q motif motif is present at residues 91-119 (REFRDVGFPEYVLQEITKAGFVEPTPIQS). In terms of domain architecture, Helicase ATP-binding spans 122-297 (WPMALRGRDL…RNFLFDPYKV (176 aa)). 135-142 (AETGSGKT) serves as a coordination point for ATP. A DEAD box motif is present at residues 245-248 (DEAD). Positions 325–470 (KLVNLLEDIM…KVSPELANMG (146 aa)) constitute a Helicase C-terminal domain. The interval 465–494 (ELANMGRGAPPPSSGHRDRYRGYGGGRSWS) is disordered.

The protein belongs to the DEAD box helicase family. DDX5/DBP2 subfamily.

The protein localises to the nucleus. It catalyses the reaction ATP + H2O = ADP + phosphate + H(+). In terms of biological role, ATP-dependent RNA helicase involved nonsense-mediated mRNA decay and ribosome biogenesis through rRNA processing. This is DEAD-box ATP-dependent RNA helicase 20 from Oryza sativa subsp. japonica (Rice).